Consider the following 247-residue polypeptide: 7-carboxy-7-deazaguanine synthase (247 aa).

Substrate is bound by residues 15–17 and Arg30; that span reads IQG. Positions 21 to 247 constitute a Radical SAM core domain; the sequence is LVGRRQIFVR…PQMHRALGLR (227 aa). [4Fe-4S] cluster contacts are provided by Cys34, Cys38, and Cys41. Position 43 (Thr43) interacts with Mg(2+). Thr78 contributes to the substrate binding site. Gly80 is an S-adenosyl-L-methionine binding site.

Belongs to the radical SAM superfamily. 7-carboxy-7-deazaguanine synthase family. As to quaternary structure, homodimer. [4Fe-4S] cluster is required as a cofactor. Requires S-adenosyl-L-methionine as cofactor. The cofactor is Mg(2+).

It carries out the reaction 6-carboxy-5,6,7,8-tetrahydropterin + H(+) = 7-carboxy-7-deazaguanine + NH4(+). The protein operates within purine metabolism; 7-cyano-7-deazaguanine biosynthesis. Functionally, catalyzes the complex heterocyclic radical-mediated conversion of 6-carboxy-5,6,7,8-tetrahydropterin (CPH4) to 7-carboxy-7-deazaguanine (CDG), a step common to the biosynthetic pathways of all 7-deazapurine-containing compounds. The sequence is that of 7-carboxy-7-deazaguanine synthase from Methanothermobacter thermautotrophicus (strain ATCC 29096 / DSM 1053 / JCM 10044 / NBRC 100330 / Delta H) (Methanobacterium thermoautotrophicum).